Reading from the N-terminus, the 971-residue chain is Isoleucine--tRNA ligase (971 aa).

Residues 64-74 carry the 'HIGH' region motif; sequence PYANGHIHIGH. Glu602 contributes to the L-isoleucyl-5'-AMP binding site. The 'KMSKS' region motif lies at 643 to 647; that stretch reads KMSKS. Lys646 contributes to the ATP binding site.

This sequence belongs to the class-I aminoacyl-tRNA synthetase family. IleS type 1 subfamily. In terms of assembly, monomer.

It localises to the cytoplasm. The catalysed reaction is tRNA(Ile) + L-isoleucine + ATP = L-isoleucyl-tRNA(Ile) + AMP + diphosphate. In terms of biological role, catalyzes the attachment of isoleucine to tRNA(Ile). As IleRS can inadvertently accommodate and process structurally similar amino acids such as valine, to avoid such errors it has two additional distinct tRNA(Ile)-dependent editing activities. One activity is designated as 'pretransfer' editing and involves the hydrolysis of activated Val-AMP. The other activity is designated 'posttransfer' editing and involves deacylation of mischarged Val-tRNA(Ile). The protein is Isoleucine--tRNA ligase of Bartonella quintana (strain Toulouse) (Rochalimaea quintana).